The sequence spans 434 residues: uncharacterized protein (434 aa).

11 consecutive transmembrane segments (helical) span residues 50-70, 72-92, 95-115, 135-155, 158-178, 179-199, 229-249, 288-308, 319-339, 376-396, and 412-432; these read GSIAFGLSIGFVASVGISFTL, TGLLNAWLLFLPTDILGVLAI, LMAFGLGAIWGVLILTCLLPV, SPVVSAFALFPLVAIFYQFGW, SLIAAVVVLMTRVVVVRYFPH, LNPESIEIFIGMVMLLGIAIT, LPYIAIVGALIAAVASMKIFA, GFVPLIATTALATGVYAVAGF, PNPMVAAVLGAVVISAEVLLL, IFAAIKMAGYTGFSIAVAIYF, and VVAVMITGILLNVLYWLGLFV.

It is found in the cell membrane. This is an uncharacterized protein from Escherichia coli (strain K12).